The primary structure comprises 272 residues: Phosphoglycolate phosphatase (272 aa).

The active-site Nucleophile is the Asp19. The Mg(2+) site is built by Asp19, Asp21, and Asp182.

Belongs to the HAD-like hydrolase superfamily. CbbY/CbbZ/Gph/YieH family. Mg(2+) is required as a cofactor.

It carries out the reaction 2-phosphoglycolate + H2O = glycolate + phosphate. It participates in organic acid metabolism; glycolate biosynthesis; glycolate from 2-phosphoglycolate: step 1/1. In terms of biological role, specifically catalyzes the dephosphorylation of 2-phosphoglycolate. Is involved in the dissimilation of the intracellular 2-phosphoglycolate formed during the DNA repair of 3'-phosphoglycolate ends, a major class of DNA lesions induced by oxidative stress. In Pseudomonas putida (strain ATCC 47054 / DSM 6125 / CFBP 8728 / NCIMB 11950 / KT2440), this protein is Phosphoglycolate phosphatase.